Consider the following 88-residue polypeptide: HssA/B-like protein 11 (88 aa).

This sequence belongs to the hssA/B family.

The polypeptide is HssA/B-like protein 11 (hssl11) (Dictyostelium discoideum (Social amoeba)).